A 673-amino-acid polypeptide reads, in one-letter code: Methionine--tRNA ligase (673 aa).

Positions 13-23 match the 'HIGH' region motif; it reads PYANGSIHLGH. Positions 144, 147, 157, and 160 each coordinate Zn(2+). The 'KMSKS' region signature appears at 330–334; that stretch reads KMSKS. K333 serves as a coordination point for ATP. In terms of domain architecture, tRNA-binding spans 572-673; that stretch reads DFAQLDLRIA…GRARAGMTIS (102 aa).

Belongs to the class-I aminoacyl-tRNA synthetase family. MetG type 1 subfamily. As to quaternary structure, homodimer. The cofactor is Zn(2+).

Its subcellular location is the cytoplasm. It catalyses the reaction tRNA(Met) + L-methionine + ATP = L-methionyl-tRNA(Met) + AMP + diphosphate. In terms of biological role, is required not only for elongation of protein synthesis but also for the initiation of all mRNA translation through initiator tRNA(fMet) aminoacylation. This Dichelobacter nodosus (strain VCS1703A) protein is Methionine--tRNA ligase.